We begin with the raw amino-acid sequence, 113 residues long: T cell receptor alpha variable 36/delta variable 7 (113 aa).

The N-terminal stretch at Met1–Ser21 is a signal peptide. An Ig-like domain is found at Asp23 to Glu113. Residues Asn43 and Asn96 are each glycosylated (N-linked (GlcNAc...) asparagine). A disulfide bridge connects residues Cys44 and Cys110.

In terms of assembly, alpha-beta TR is a heterodimer composed of an alpha and beta chain; disulfide-linked. The alpha-beta TR is associated with the transmembrane signaling CD3 coreceptor proteins to form the TR-CD3 (TcR or TCR). The assembly of alpha-beta TR heterodimers with CD3 occurs in the endoplasmic reticulum where a single alpha-beta TR heterodimer associates with one CD3D-CD3E heterodimer, one CD3G-CD3E heterodimer and one CD247 homodimer forming a stable octameric structure. CD3D-CD3E and CD3G-CD3E heterodimers preferentially associate with TR alpha and TR beta chains, respectively. The association of the CD247 homodimer is the last step of TcR assembly in the endoplasmic reticulum and is required for transport to the cell surface.

It localises to the cell membrane. Its function is as follows. V region of the variable domain of T cell receptor (TR) alpha chain that participates in the antigen recognition. Alpha-beta T cell receptors are antigen specific receptors which are essential to the immune response and are present on the cell surface of T lymphocytes. Recognize peptide-major histocompatibility (MH) (pMH) complexes that are displayed by antigen presenting cells (APC), a prerequisite for efficient T cell adaptive immunity against pathogens. Binding of alpha-beta TR to pMH complex initiates TR-CD3 clustering on the cell surface and intracellular activation of LCK that phosphorylates the ITAM motifs of CD3G, CD3D, CD3E and CD247 enabling the recruitment of ZAP70. In turn ZAP70 phosphorylates LAT, which recruits numerous signaling molecules to form the LAT signalosome. The LAT signalosome propagates signal branching to three major signaling pathways, the calcium, the mitogen-activated protein kinase (MAPK) kinase and the nuclear factor NF-kappa-B (NF-kB) pathways, leading to the mobilization of transcription factors that are critical for gene expression and essential for T cell growth and differentiation. The T cell repertoire is generated in the thymus, by V-(D)-J rearrangement. This repertoire is then shaped by intrathymic selection events to generate a peripheral T cell pool of self-MH restricted, non-autoaggressive T cells. Post-thymic interaction of alpha-beta TR with the pMH complexes shapes TR structural and functional avidity. The polypeptide is T cell receptor alpha variable 36/delta variable 7 (Homo sapiens (Human)).